The sequence spans 305 residues: UDP-3-O-acyl-N-acetylglucosamine deacetylase (305 aa).

His-79, His-238, and Asp-242 together coordinate Zn(2+). The Proton donor role is filled by His-265.

Belongs to the LpxC family. Zn(2+) serves as cofactor.

The enzyme catalyses a UDP-3-O-[(3R)-3-hydroxyacyl]-N-acetyl-alpha-D-glucosamine + H2O = a UDP-3-O-[(3R)-3-hydroxyacyl]-alpha-D-glucosamine + acetate. It functions in the pathway glycolipid biosynthesis; lipid IV(A) biosynthesis; lipid IV(A) from (3R)-3-hydroxytetradecanoyl-[acyl-carrier-protein] and UDP-N-acetyl-alpha-D-glucosamine: step 2/6. In terms of biological role, catalyzes the hydrolysis of UDP-3-O-myristoyl-N-acetylglucosamine to form UDP-3-O-myristoylglucosamine and acetate, the committed step in lipid A biosynthesis. This is UDP-3-O-acyl-N-acetylglucosamine deacetylase from Klebsiella pneumoniae (strain 342).